We begin with the raw amino-acid sequence, 750 residues long: uncharacterized protein (750 aa).

The next 3 membrane-spanning stretches (helical) occupy residues Met-1–Thr-21, Tyr-465–Leu-485, and Gly-586–Ser-606.

It localises to the membrane. This is an uncharacterized protein from Saccharomyces cerevisiae (strain ATCC 204508 / S288c) (Baker's yeast).